The primary structure comprises 231 residues: Flagellar L-ring protein (231 aa).

Residues 1–18 form the signal peptide; that stretch reads MNRLLSVFALGGAVLLAG. Residue Cys-19 is the site of N-palmitoyl cysteine attachment. Cys-19 carries the S-diacylglycerol cysteine lipid modification.

Belongs to the FlgH family. As to quaternary structure, the basal body constitutes a major portion of the flagellar organelle and consists of four rings (L,P,S, and M) mounted on a central rod.

Its subcellular location is the cell outer membrane. It is found in the bacterial flagellum basal body. Functionally, assembles around the rod to form the L-ring and probably protects the motor/basal body from shearing forces during rotation. The polypeptide is Flagellar L-ring protein (Pseudomonas putida (strain GB-1)).